Here is a 508-residue protein sequence, read N- to C-terminus: MGLPWYRVHTVVLNDPGRLLAVHIMHTALVAGWAGSMALYELAVFDPSDPVLDPMWRQGMFVIPFMTRLGITNSWGGWNITGGTITNPGIWSYEGVAGAHIVFSGLCFLAAIWHWVYWDLEIFSDERTGKPSLDLPKIFGIHLFLAGLACFGFGAFHVTGLYGPGIWVSDPYGLTGRVQPVNPAWGVEGFDPFVPGGVASHHIAAGTLGILAGLFHLSVRPPQRLYKGLRMGNIETVLSSSIAAVFFAAFVVAGTMWYGSATTPIELFGPTRYQWDQGYFQQEIYRRVGAGLAENQSFSEAWSKIPEKLAFYDYIGNNPAKGGLFRAGSMDNGDGIAVGWLGHPIFRDKEGRELFVRRMPTFFETFPVVLVDGDGIVRADVPFRRAESKYSVEQVGVTVEFYGGELNGVSYSDPATVKKYARRAQLGEIFELDRATLKSDGVFRSSPRGWFTFGHASFALLFFFGHIWHGSRTLFRDVFAGIDPDLDSQVEFGAFQKLGDPTTRRQVV.

Transmembrane regions (helical) follow at residues 21-36 (AVHIMHTALVAGWAGS), 101-115 (IVFSGLCFLAAIWHW), 140-156 (GIHLFLAGLACFGFGAF), 203-218 (IAAGTLGILAGLFHLS), 237-252 (VLSSSIAAVFFAAFVV), and 457-472 (SFALLFFFGHIWHGSR).

This sequence belongs to the PsbB/PsbC family. PsbB subfamily. As to quaternary structure, PSII is composed of 1 copy each of membrane proteins PsbA, PsbB, PsbC, PsbD, PsbE, PsbF, PsbH, PsbI, PsbJ, PsbK, PsbL, PsbM, PsbT, PsbX, PsbY, PsbZ, Psb30/Ycf12, at least 3 peripheral proteins of the oxygen-evolving complex and a large number of cofactors. It forms dimeric complexes. It depends on Binds multiple chlorophylls. PSII binds additional chlorophylls, carotenoids and specific lipids. as a cofactor.

Its subcellular location is the plastid. The protein resides in the chloroplast thylakoid membrane. In terms of biological role, one of the components of the core complex of photosystem II (PSII). It binds chlorophyll and helps catalyze the primary light-induced photochemical processes of PSII. PSII is a light-driven water:plastoquinone oxidoreductase, using light energy to abstract electrons from H(2)O, generating O(2) and a proton gradient subsequently used for ATP formation. This chain is Photosystem II CP47 reaction center protein, found in Lotus japonicus (Lotus corniculatus var. japonicus).